Reading from the N-terminus, the 201-residue chain is MTTTVGIVAKDGVVLATDKRVTAGYYIAHKAGEKIWKIDDHVAATMSGGVADLQSVLSFLSLRAREYRVEHKRPIPIRALVNYVSLLLFYSRPYIYLVHSIVGGVDAEEGPVLYMVDWLGTVTKEKYIATGSGSPYAKGALEVAYREDLTIDEAVELAIRAVKAAIRNDPGSGEGIDVVTITKSDGFRRVFTTQQKIIIPE.

Met1 is a propeptide (removed in mature form; by autocatalysis). Thr2 (nucleophile) is an active-site residue.

This sequence belongs to the peptidase T1B family. In terms of assembly, the 20S proteasome core is composed of 14 alpha and 14 beta subunits that assemble into four stacked heptameric rings, resulting in a barrel-shaped structure. The two inner rings, each composed of seven catalytic beta subunits, are sandwiched by two outer rings, each composed of seven alpha subunits. The catalytic chamber with the active sites is on the inside of the barrel. Has a gated structure, the ends of the cylinder being occluded by the N-termini of the alpha-subunits. Is capped at one or both ends by the proteasome regulatory ATPase, PAN.

The protein localises to the cytoplasm. The catalysed reaction is Cleavage of peptide bonds with very broad specificity.. With respect to regulation, the formation of the proteasomal ATPase PAN-20S proteasome complex, via the docking of the C-termini of PAN into the intersubunit pockets in the alpha-rings, triggers opening of the gate for substrate entry. Interconversion between the open-gate and close-gate conformations leads to a dynamic regulation of the 20S proteasome proteolysis activity. Its function is as follows. Component of the proteasome core, a large protease complex with broad specificity involved in protein degradation. This chain is Proteasome subunit beta 1, found in Pyrobaculum calidifontis (strain DSM 21063 / JCM 11548 / VA1).